We begin with the raw amino-acid sequence, 343 residues long: MLKLVCAVVLIATVNAKGSSPGFGIGQLPGITVVSGGVSGGSLSGGVSGGSLSGGIYGGYPRLYGGFGPGGVYGSINSFGGVNTNAYGLYGTSPAVRGAAQGAAATSVLGILSGVPSRISGYSVGTGGGRAFVSGSATPIGGLPYGGYGYGGYGYGGYGGYGYGGYGYPDIAYYGGSTYGNIASGVISSPTSGVSLPYGGILGLYGGYGGYGSGYGGYGMGSAYSIGNYLSGHGGYYGGSYPSYGSTLTGVSQSLSFGRAIMSGQAFGAGVPAFGSVNFGNFGVGTGGIGILGGGGVIGSGGVIGGGGVIGGGGVVGGGAVIGGGGVIGGGVPTGGIIRKKKY.

An N-terminal signal peptide occupies residues 1 to 16; that stretch reads MLKLVCAVVLIATVNA.

Prismatic layer of shell (at protein level).

It localises to the secreted. In Pinctada maxima (Silver-lipped pearl oyster), this protein is Shematrin-like protein 3.